A 364-amino-acid polypeptide reads, in one-letter code: Aminomethyltransferase (364 aa).

The protein belongs to the GcvT family. In terms of assembly, the glycine cleavage system is composed of four proteins: P, T, L and H.

The catalysed reaction is N(6)-[(R)-S(8)-aminomethyldihydrolipoyl]-L-lysyl-[protein] + (6S)-5,6,7,8-tetrahydrofolate = N(6)-[(R)-dihydrolipoyl]-L-lysyl-[protein] + (6R)-5,10-methylene-5,6,7,8-tetrahydrofolate + NH4(+). Functionally, the glycine cleavage system catalyzes the degradation of glycine. This Enterobacter sp. (strain 638) protein is Aminomethyltransferase.